Reading from the N-terminus, the 464-residue chain is E3 ubiquitin-protein ligase RNF38 (464 aa).

The disordered stretch occupies residues 1–94 (MRESEDSPSP…NSISQDENYH (94 aa)). The Bipartite nuclear localization signal 1 motif lies at 6–20 (DSPSPKRQRLSHSVF). A compositionally biased stretch (polar residues) spans 38-53 (MTSNRQPPSVRPNQHH). The short motif at 64 to 79 (RNRRSPPVRRQRGRRE) is the Bipartite nuclear localization signal 2 element. Residues 64–83 (RNRRSPPVRRQRGRRERLSR) are compositionally biased toward basic residues. Residues 412–453 (CVVCMCDFESRQLLRVLPCNHEFHAKCVDKWLKGNRTCPICR) form an RING-type zinc finger.

It is found in the nucleus. The enzyme catalyses S-ubiquitinyl-[E2 ubiquitin-conjugating enzyme]-L-cysteine + [acceptor protein]-L-lysine = [E2 ubiquitin-conjugating enzyme]-L-cysteine + N(6)-ubiquitinyl-[acceptor protein]-L-lysine.. Its pathway is protein modification; protein ubiquitination. Acts as an E3 ubiquitin-protein ligase able to ubiquitinate p53/TP53 which promotes its relocalization to discrete foci associated with PML nuclear bodies. Exhibits preference for UBE2D2 as a E2 enzyme. The protein is E3 ubiquitin-protein ligase RNF38 of Mus musculus (Mouse).